The following is a 194-amino-acid chain: Imidazole glycerol phosphate synthase subunit HisH (194 aa).

The 194-residue stretch at 1–194 (MIIIDTGCAN…QLLKNFVENL (194 aa)) folds into the Glutamine amidotransferase type-1 domain. C75 serves as the catalytic Nucleophile. Catalysis depends on residues H175 and E177.

In terms of assembly, heterodimer of HisH and HisF.

It is found in the cytoplasm. The catalysed reaction is 5-[(5-phospho-1-deoxy-D-ribulos-1-ylimino)methylamino]-1-(5-phospho-beta-D-ribosyl)imidazole-4-carboxamide + L-glutamine = D-erythro-1-(imidazol-4-yl)glycerol 3-phosphate + 5-amino-1-(5-phospho-beta-D-ribosyl)imidazole-4-carboxamide + L-glutamate + H(+). It carries out the reaction L-glutamine + H2O = L-glutamate + NH4(+). It functions in the pathway amino-acid biosynthesis; L-histidine biosynthesis; L-histidine from 5-phospho-alpha-D-ribose 1-diphosphate: step 5/9. In terms of biological role, IGPS catalyzes the conversion of PRFAR and glutamine to IGP, AICAR and glutamate. The HisH subunit catalyzes the hydrolysis of glutamine to glutamate and ammonia as part of the synthesis of IGP and AICAR. The resulting ammonia molecule is channeled to the active site of HisF. The sequence is that of Imidazole glycerol phosphate synthase subunit HisH from Mannheimia succiniciproducens (strain KCTC 0769BP / MBEL55E).